Consider the following 580-residue polypeptide: Capsid vertex component 2 (580 aa).

Interaction with major capsid protein/MCP regions lie at residues Met-1–Ala-49 and Met-1–Glu-50. Residues Ala-108–Pro-129 form a disordered region. Residues Pro-119 to Pro-128 are compositionally biased toward gly residues.

This sequence belongs to the herpesviridae CVC2 protein family. Heterodimerizes with CVC1. Interacts with major capsid protein/MCP and triplex capsid protein 1/TRX1 at the pentamer vertices. Interacts with the large tegument protein/LTP. Interacts with host NUP214; this interaction might be essential to the capsid docking to the host nuclear pore. Interacts with host TMEM250.

Its subcellular location is the virion. The protein resides in the host nucleus. In terms of biological role, capsid vertex-specific component that plays a role during viral DNA encapsidation, assuring correct genome cleavage and presumably stabilizing capsids that contain full-length viral genomes. Participates in the interaction between the capsid and the tegument through interaction with the large tegument protein/LTP. May mediate the capsid docking to the nuclear pore allowing entry of the viral genome into the host nucleus through binding to host nucleoporins NUP214. This Human herpesvirus 1 (strain 17) (HHV-1) protein is Capsid vertex component 2.